An 892-amino-acid chain; its full sequence is Protein RRP6-like 3 (892 aa).

The 169-residue stretch at 119–287 folds into the 3'-5' exonuclease domain; that stretch reads YVWVETESQL…IADSLTTELK (169 aa). One can recognise an HRDC domain in the interval 350–436; it reads SLNAEELVRK…CSHLDDIYKM (87 aa). The segment at 785-811 is disordered; the sequence is VDDSGDGTSEGDGAKELNDTQCNGNTL.

It is found in the cytoplasm. Its subcellular location is the cytosol. The chain is Protein RRP6-like 3 from Arabidopsis thaliana (Mouse-ear cress).